Consider the following 183-residue polypeptide: Gamma-crystallin N (183 aa).

4 Beta/gamma crystallin 'Greek key' domains span residues 6 to 46 (GKIT…RVES), 47 to 89 (GAWV…RPVG), 95 to 136 (FRID…KVYG), and 138 to 180 (GAWV…RRVL).

Belongs to the beta/gamma-crystallin family. As to quaternary structure, monomer. In terms of tissue distribution, primordially eye-specific. Present in lens nucleus. In the retina, expression in observed in the outer plexiform layer (containing photoreceptors axons and synapses) and photoreceptor outer segments (at protein level). Also detected in the auditory hindbrain where it is highly expressed in the medial nucleus of the trapezoid body, but also present in other nuclei of the superior olivary complex.

Crystallins are the dominant structural components of the vertebrate eye lens. Also plays an important role for integrity and function of auditory nuclei. In Mus musculus (Mouse), this protein is Gamma-crystallin N.